Here is a 234-residue protein sequence, read N- to C-terminus: 7-carboxy-7-deazaguanine synthase (234 aa).

Substrate-binding positions include 36 to 38 (IQG) and R51. Residues 42 to 234 (FVGYPSIFIR…LQTHKFLGIE (193 aa)) enclose the Radical SAM core domain. Residues C55, C59, and C62 each coordinate [4Fe-4S] cluster. T64 provides a ligand contact to Mg(2+). Substrate is bound at residue T100. S-adenosyl-L-methionine-binding positions include G102, 144-146 (SPK), and 195-198 (QSMD).

Belongs to the radical SAM superfamily. 7-carboxy-7-deazaguanine synthase family. In terms of assembly, homodimer. It depends on [4Fe-4S] cluster as a cofactor. The cofactor is S-adenosyl-L-methionine. Mg(2+) is required as a cofactor.

The enzyme catalyses 6-carboxy-5,6,7,8-tetrahydropterin + H(+) = 7-carboxy-7-deazaguanine + NH4(+). It participates in purine metabolism; 7-cyano-7-deazaguanine biosynthesis. Functionally, catalyzes the complex heterocyclic radical-mediated conversion of 6-carboxy-5,6,7,8-tetrahydropterin (CPH4) to 7-carboxy-7-deazaguanine (CDG), a step common to the biosynthetic pathways of all 7-deazapurine-containing compounds. This Rickettsia prowazekii (strain Madrid E) protein is 7-carboxy-7-deazaguanine synthase.